A 207-amino-acid polypeptide reads, in one-letter code: 8-oxoguanine DNA glycosylase/AP lyase (207 aa).

Active-site residues include lysine 129 and aspartate 147.

This sequence belongs to the type-2 OGG1 family.

The enzyme catalyses 2'-deoxyribonucleotide-(2'-deoxyribose 5'-phosphate)-2'-deoxyribonucleotide-DNA = a 3'-end 2'-deoxyribonucleotide-(2,3-dehydro-2,3-deoxyribose 5'-phosphate)-DNA + a 5'-end 5'-phospho-2'-deoxyribonucleoside-DNA + H(+). Its function is as follows. Catalyzes the excision of an oxidatively damaged form of guanine (7,8-dihydro-8-oxoguanine = 8-oxoG) from DNA. Also cleaves the DNA backbone at apurinic/apyrimidinic sites (AP sites). The chain is 8-oxoguanine DNA glycosylase/AP lyase from Thermotoga sp. (strain RQ2).